A 452-amino-acid polypeptide reads, in one-letter code: Lysine-rich nucleolar protein 1 (452 aa).

Disordered regions lie at residues 1-28 (MITKAHKGEVGLGLPEKKKKKKKVVKEP), 55-161 (VIQE…AFSG), and 184-305 (REQA…PDTD). A Glycyl lysine isopeptide (Lys-Gly) (interchain with G-Cter in SUMO2) cross-link involves residue lysine 7. The span at 65–75 (LVKKKKKKKGH) shows a compositional bias: basic residues. Basic and acidic residues predominate over residues 78–98 (ICEEHLEPEITLRAGRTERSH). Serine 112 is subject to Phosphoserine. Residue lysine 126 forms a Glycyl lysine isopeptide (Lys-Gly) (interchain with G-Cter in SUMO2) linkage. Residues 127-139 (TSPDPRQDEEVTR) are compositionally biased toward basic and acidic residues. Serine 128 is modified (phosphoserine). 2 stretches are compositionally biased toward basic residues: residues 140–151 (VGKKLKKHKKEK) and 258–267 (SVKKKVKSKK). A Phosphoserine modification is found at serine 258. A Glycyl lysine isopeptide (Lys-Gly) (interchain with G-Cter in SUMO2) cross-link involves residue lysine 280. Residues 293–305 (VAEEPWEEEPDTD) show a composition bias toward acidic residues. The tract at residues 300 to 452 (EEPDTDLEVV…NASKSIKFED (153 aa)) is interaction with ZNF106. Threonine 304 bears the Phosphothreonine mark. Glycyl lysine isopeptide (Lys-Gly) (interchain with G-Cter in SUMO2) cross-links involve residues lysine 313, lysine 347, lysine 367, lysine 369, and lysine 401. Omega-N-methylarginine is present on arginine 424. Residue lysine 436 forms a Glycyl lysine isopeptide (Lys-Gly) (interchain with G-Cter in SUMO2) linkage.

In terms of assembly, interacts with ZNF106.

It is found in the nucleus. The protein localises to the nucleolus. This is Lysine-rich nucleolar protein 1 (KNOP1) from Bos taurus (Bovine).